The sequence spans 520 residues: Peptide chain release factor 3 (520 aa).

The tr-type G domain maps to 8-277 (ESRKTFAIIS…HAPMPNARQT (270 aa)). GTP-binding positions include 17-24 (SHPDAGKT), 85-89 (DTPGH), and 139-142 (NKLD).

The protein belongs to the TRAFAC class translation factor GTPase superfamily. Classic translation factor GTPase family. PrfC subfamily.

The protein localises to the cytoplasm. Increases the formation of ribosomal termination complexes and stimulates activities of RF-1 and RF-2. It binds guanine nucleotides and has strong preference for UGA stop codons. It may interact directly with the ribosome. The stimulation of RF-1 and RF-2 is significantly reduced by GTP and GDP, but not by GMP. The chain is Peptide chain release factor 3 from Staphylococcus epidermidis (strain ATCC 35984 / DSM 28319 / BCRC 17069 / CCUG 31568 / BM 3577 / RP62A).